Consider the following 205-residue polypeptide: MLSQDSNDDTEDVSLFDAEEETTNRPRKSKIRHPVASFFHLFFRVSAVVVYLLCELLSSSFIACMVTIILLLSCDFWAVKNVTGRLMVGLRWWNHIDEDGKSHWVFESRKSTPQDNKTISEAESRIFWLGLIACPVLWVIFAFSALFSFRVKWLAVVIMGVVLQGANLYGYIRCKVGSKKNLTSMATSYLGKQFLRQNTGDGQTS.

Met-1 bears the N-acetylmethionine mark. Over residues Met-1–Glu-21 the composition is skewed to acidic residues. Residues Met-1 to Arg-27 are disordered. 4 helical membrane-spanning segments follow: residues Pro-34 to Leu-53, Cys-54 to Leu-72, Ile-126 to Leu-146, and Lys-152 to Ile-172.

This sequence belongs to the TVP23 family.

It localises to the membrane. This is Golgi apparatus membrane protein TVP23 homolog B (Tvp23b) from Mus musculus (Mouse).